Consider the following 486-residue polypeptide: Pup--protein ligase (486 aa).

Glu-33 contacts Mg(2+). Arg-76 contributes to the ATP binding site. Residue Tyr-78 participates in Mg(2+) binding. The Proton acceptor role is filled by Asp-80. Glu-86 is a binding site for Mg(2+). ATP contacts are provided by Thr-89 and Trp-451.

This sequence belongs to the Pup ligase/Pup deamidase family. Pup-conjugating enzyme subfamily.

It carries out the reaction ATP + [prokaryotic ubiquitin-like protein]-L-glutamate + [protein]-L-lysine = ADP + phosphate + N(6)-([prokaryotic ubiquitin-like protein]-gamma-L-glutamyl)-[protein]-L-lysine.. The protein operates within protein degradation; proteasomal Pup-dependent pathway. It functions in the pathway protein modification; protein pupylation. Functionally, catalyzes the covalent attachment of the prokaryotic ubiquitin-like protein modifier Pup to the proteasomal substrate proteins, thereby targeting them for proteasomal degradation. This tagging system is termed pupylation. The ligation reaction involves the side-chain carboxylate of the C-terminal glutamate of Pup and the side-chain amino group of a substrate lysine. The chain is Pup--protein ligase from Bifidobacterium longum (strain NCC 2705).